The chain runs to 46 residues: Large ribosomal subunit protein bL34c (46 aa).

This sequence belongs to the bacterial ribosomal protein bL34 family.

The protein localises to the plastid. It is found in the chloroplast. The sequence is that of Large ribosomal subunit protein bL34c (rpl34) from Guillardia theta (Cryptophyte).